We begin with the raw amino-acid sequence, 476 residues long: Argininosuccinate lyase (476 aa).

This sequence belongs to the lyase 1 family. Argininosuccinate lyase subfamily.

The protein resides in the cytoplasm. It catalyses the reaction 2-(N(omega)-L-arginino)succinate = fumarate + L-arginine. It functions in the pathway amino-acid biosynthesis; L-arginine biosynthesis; L-arginine from L-ornithine and carbamoyl phosphate: step 3/3. The chain is Argininosuccinate lyase from Leptothrix cholodnii (strain ATCC 51168 / LMG 8142 / SP-6) (Leptothrix discophora (strain SP-6)).